Reading from the N-terminus, the 519-residue chain is MLTARLLLPRLLCLQGRTTSYSTAAALPNPIPNPEICYNKLFINNEWHDAVSKKTFPTVNPTTGEVIGHVAEGDRADVDLAVKAAREAFRLGSPWRRMDASERGRLLNRLADLVERDRVYLASLETLDNGKPFQESYVLDLDEVIKVYRYFAGWADKWHGKTIPMDGEHFCFTRHEPVGVCGQIIPWNFPLVMQGWKLAPALATGNTVVMKVAEQTPLSALYLASLIKEAGFPPGVVNIITGYGPTAGAAIAQHMDVDKVAFTGSTEVGHLIQKAAGESNLKRVTLELGGKSPSIVLADADMEHAVDQCHEALFFNMGQCCCAGSRTFVEESIYREFLERTVEKAKQRKVGNPFELDTQQGPQVDKEQFERILGYIRLGQKEGAKLLCGGERLGERGFFIKPTVFGDVQDGMRIAKEEIFGPVQPLFKFKKIEEVIQRANNTRYGLAAAVFTRDLDKAIYFTQALQAGTVWVNTYNIVTCHTPFGGFKESGNGRELGEDGLRAYTEVKTVTIKVPEKNS.

The N-terminal 19 residues, 1 to 19 (MLTARLLLPRLLCLQGRTT), are a transit peptide targeting the mitochondrion. N6-acetyllysine is present on lysine 53. Lysine 54 carries the post-translational modification N6-acetyllysine; alternate. An N6-succinyllysine; alternate modification is found at lysine 54. Lysine 83 carries the N6-succinyllysine modification. NAD(+) is bound at residue 264-269 (GSTEVG). Glutamate 287 (proton acceptor) is an active-site residue. Cysteine 321 serves as the catalytic Nucleophile. Lysine 366, lysine 385, lysine 401, lysine 416, and lysine 428 each carry N6-acetyllysine; alternate. An N6-succinyllysine; alternate mark is found at lysine 366, lysine 385, lysine 401, lysine 416, and lysine 428. Lysine 431 is modified (N6-acetyllysine).

Belongs to the aldehyde dehydrogenase family. As to quaternary structure, homotetramer.

It is found in the mitochondrion matrix. The catalysed reaction is an aldehyde + NAD(+) + H2O = a carboxylate + NADH + 2 H(+). It participates in alcohol metabolism; ethanol degradation; acetate from ethanol: step 2/2. ALDHs play a major role in the detoxification of alcohol-derived acetaldehyde. They are involved in the metabolism of corticosteroids, biogenic amines, neurotransmitters, and lipid peroxidation. This Mus musculus (Mouse) protein is Aldehyde dehydrogenase X, mitochondrial (Aldh1b1).